The primary structure comprises 500 residues: Nitrate/nitrite transporter NrtP (500 aa).

A run of 12 helical transmembrane segments spans residues 19–39 (WFAF…ATTI), 52–72 (TLGI…GMLL), 79–99 (ITYS…ALAQ), 109–129 (LLMG…AEWF), 147–167 (FGAF…SFFS), 175–195 (LAIA…YNTV), 220–240 (SFWA…LLAW), 247–267 (IHFL…GLFA), 364–384 (WTMT…HFIN), 389–409 (IPVA…GCGA), 425–445 (IAGN…TIFS), and 451–471 (TLFS…AFFL).

It belongs to the major facilitator superfamily. Nitrate/nitrite porter (TC 2.A.1.8) family.

The protein resides in the cell inner membrane. Its function is as follows. Transport system for both nitrate and nitrite, with much higher affinity for nitrate than for nitrite. This chain is Nitrate/nitrite transporter NrtP, found in Nostoc punctiforme (strain ATCC 29133 / PCC 73102).